Reading from the N-terminus, the 192-residue chain is uncharacterized protein (192 aa).

It to M.thermoautotrophicum MTH863.

This is an uncharacterized protein from Methanocaldococcus jannaschii (strain ATCC 43067 / DSM 2661 / JAL-1 / JCM 10045 / NBRC 100440) (Methanococcus jannaschii).